A 208-amino-acid polypeptide reads, in one-letter code: Uracil phosphoribosyltransferase (208 aa).

Residues Arg78, Arg103, and 130–138 contribute to the 5-phospho-alpha-D-ribose 1-diphosphate site; that span reads DPMLATGGS. Residues Ile193 and 198 to 200 contribute to the uracil site; that span reads GDA. A 5-phospho-alpha-D-ribose 1-diphosphate-binding site is contributed by Asp199.

Belongs to the UPRTase family. It depends on Mg(2+) as a cofactor.

The catalysed reaction is UMP + diphosphate = 5-phospho-alpha-D-ribose 1-diphosphate + uracil. The protein operates within pyrimidine metabolism; UMP biosynthesis via salvage pathway; UMP from uracil: step 1/1. Its activity is regulated as follows. Allosterically activated by GTP. In terms of biological role, catalyzes the conversion of uracil and 5-phospho-alpha-D-ribose 1-diphosphate (PRPP) to UMP and diphosphate. The polypeptide is Uracil phosphoribosyltransferase (Wolinella succinogenes (strain ATCC 29543 / DSM 1740 / CCUG 13145 / JCM 31913 / LMG 7466 / NCTC 11488 / FDC 602W) (Vibrio succinogenes)).